A 264-amino-acid chain; its full sequence is DNA-directed RNA polymerase subunit Rpo3 (264 aa).

Residues cysteine 203, cysteine 206, and cysteine 209 each coordinate [3Fe-4S] cluster.

The protein belongs to the archaeal Rpo3/eukaryotic RPB3 RNA polymerase subunit family. Part of the RNA polymerase complex. [3Fe-4S] cluster is required as a cofactor.

Its subcellular location is the cytoplasm. The catalysed reaction is RNA(n) + a ribonucleoside 5'-triphosphate = RNA(n+1) + diphosphate. Functionally, DNA-dependent RNA polymerase (RNAP) catalyzes the transcription of DNA into RNA using the four ribonucleoside triphosphates as substrates. The protein is DNA-directed RNA polymerase subunit Rpo3 of Methanothermobacter thermautotrophicus (strain ATCC 29096 / DSM 1053 / JCM 10044 / NBRC 100330 / Delta H) (Methanobacterium thermoautotrophicum).